A 218-amino-acid polypeptide reads, in one-letter code: Elongation factor Ts (218 aa).

The tract at residues 82–85 is involved in Mg(2+) ion dislocation from EF-Tu; the sequence is TDFV.

Belongs to the EF-Ts family.

Its subcellular location is the cytoplasm. In terms of biological role, associates with the EF-Tu.GDP complex and induces the exchange of GDP to GTP. It remains bound to the aminoacyl-tRNA.EF-Tu.GTP complex up to the GTP hydrolysis stage on the ribosome. The chain is Elongation factor Ts from Prochlorococcus marinus (strain MIT 9301).